A 165-amino-acid polypeptide reads, in one-letter code: Ubiquitin-fold modifier-conjugating enzyme 1 (165 aa).

Residue cysteine 117 is the Glycyl thioester intermediate of the active site.

The protein belongs to the ubiquitin-conjugating enzyme family. UFC1 subfamily.

E2-like enzyme which forms an intermediate with UFM1 via a thioester linkage. In Brugia malayi (Filarial nematode worm), this protein is Ubiquitin-fold modifier-conjugating enzyme 1.